The following is a 249-amino-acid chain: Serine 3-dehydrogenase (249 aa).

Leu-6 to Ile-30 contacts NADP(+). Ser-135 provides a ligand contact to substrate. Tyr-148 serves as the catalytic Proton acceptor.

The protein belongs to the short-chain dehydrogenases/reductases (SDR) family. In terms of assembly, homotetramer.

It carries out the reaction L-serine + NADP(+) = aminoacetaldehyde + CO2 + NADPH. In terms of biological role, catalyzes the oxidation of the hydroxyl group of serine to form 2-aminomalonate semialdehyde which is spontaneously converted into 2-aminoacetaldehyde and CO(2). Also acts on D-serine, L-glycerate, D-glycerate and 2-methyl-DL-serine. Does not act on O-methyl-DL-serine and L-threonine. The polypeptide is Serine 3-dehydrogenase (sdh) (Agrobacterium fabrum (strain C58 / ATCC 33970) (Agrobacterium tumefaciens (strain C58))).